Here is a 222-residue protein sequence, read N- to C-terminus: Thiamine-phosphate synthase (222 aa).

4-amino-2-methyl-5-(diphosphooxymethyl)pyrimidine-binding positions include 40–44 (QLRDK) and asparagine 81. Mg(2+) is bound by residues aspartate 82 and aspartate 101. Serine 120 is a 4-amino-2-methyl-5-(diphosphooxymethyl)pyrimidine binding site. 146–148 (TPT) contributes to the 2-[(2R,5Z)-2-carboxy-4-methylthiazol-5(2H)-ylidene]ethyl phosphate binding site. Residue lysine 149 coordinates 4-amino-2-methyl-5-(diphosphooxymethyl)pyrimidine. Glycine 178 lines the 2-[(2R,5Z)-2-carboxy-4-methylthiazol-5(2H)-ylidene]ethyl phosphate pocket.

This sequence belongs to the thiamine-phosphate synthase family. Mg(2+) serves as cofactor.

The catalysed reaction is 2-[(2R,5Z)-2-carboxy-4-methylthiazol-5(2H)-ylidene]ethyl phosphate + 4-amino-2-methyl-5-(diphosphooxymethyl)pyrimidine + 2 H(+) = thiamine phosphate + CO2 + diphosphate. It catalyses the reaction 2-(2-carboxy-4-methylthiazol-5-yl)ethyl phosphate + 4-amino-2-methyl-5-(diphosphooxymethyl)pyrimidine + 2 H(+) = thiamine phosphate + CO2 + diphosphate. It carries out the reaction 4-methyl-5-(2-phosphooxyethyl)-thiazole + 4-amino-2-methyl-5-(diphosphooxymethyl)pyrimidine + H(+) = thiamine phosphate + diphosphate. It participates in cofactor biosynthesis; thiamine diphosphate biosynthesis; thiamine phosphate from 4-amino-2-methyl-5-diphosphomethylpyrimidine and 4-methyl-5-(2-phosphoethyl)-thiazole: step 1/1. Its function is as follows. Condenses 4-methyl-5-(beta-hydroxyethyl)thiazole monophosphate (THZ-P) and 2-methyl-4-amino-5-hydroxymethyl pyrimidine pyrophosphate (HMP-PP) to form thiamine monophosphate (TMP). The chain is Thiamine-phosphate synthase from Mycobacterium tuberculosis (strain ATCC 25177 / H37Ra).